Reading from the N-terminus, the 211-residue chain is Proteasome subunit beta (211 aa).

Residues 1–9 (MDNDKYLKG) constitute a propeptide, removed in mature form; by autocatalysis. Threonine 10 acts as the Nucleophile in catalysis.

This sequence belongs to the peptidase T1B family. In terms of assembly, the 20S proteasome core is composed of 14 alpha and 14 beta subunits that assemble into four stacked heptameric rings, resulting in a barrel-shaped structure. The two inner rings, each composed of seven catalytic beta subunits, are sandwiched by two outer rings, each composed of seven alpha subunits. The catalytic chamber with the active sites is on the inside of the barrel. Has a gated structure, the ends of the cylinder being occluded by the N-termini of the alpha-subunits. Is capped at one or both ends by the proteasome regulatory ATPase, PAN.

Its subcellular location is the cytoplasm. It catalyses the reaction Cleavage of peptide bonds with very broad specificity.. With respect to regulation, the formation of the proteasomal ATPase PAN-20S proteasome complex, via the docking of the C-termini of PAN into the intersubunit pockets in the alpha-rings, triggers opening of the gate for substrate entry. Interconversion between the open-gate and close-gate conformations leads to a dynamic regulation of the 20S proteasome proteolysis activity. In terms of biological role, component of the proteasome core, a large protease complex with broad specificity involved in protein degradation. The polypeptide is Proteasome subunit beta (Methanosarcina barkeri (strain Fusaro / DSM 804)).